A 278-amino-acid polypeptide reads, in one-letter code: Shikimate dehydrogenase (NADP(+)) (278 aa).

Shikimate is bound by residues S18–S20 and T65. K69 functions as the Proton acceptor in the catalytic mechanism. E80 contacts NADP(+). N89 and D104 together coordinate shikimate. NADP(+) is bound by residues G129–S133 and L218. Y220 is a binding site for shikimate. G241 lines the NADP(+) pocket.

The protein belongs to the shikimate dehydrogenase family. In terms of assembly, homodimer.

It catalyses the reaction shikimate + NADP(+) = 3-dehydroshikimate + NADPH + H(+). Its pathway is metabolic intermediate biosynthesis; chorismate biosynthesis; chorismate from D-erythrose 4-phosphate and phosphoenolpyruvate: step 4/7. Its function is as follows. Involved in the biosynthesis of the chorismate, which leads to the biosynthesis of aromatic amino acids. Catalyzes the reversible NADPH linked reduction of 3-dehydroshikimate (DHSA) to yield shikimate (SA). The chain is Shikimate dehydrogenase (NADP(+)) from Rhodopseudomonas palustris (strain ATCC BAA-98 / CGA009).